Consider the following 243-residue polypeptide: Small ribosomal subunit protein uS3 (243 aa).

The 69-residue stretch at 39–107 (MRKFVMSELK…ETHLNIVEVR (69 aa)) folds into the KH type-2 domain. A disordered region spans residues 214–243 (ASERRAMEGDAQGPASRDRDRDRDRRRDNA). Positions 229–243 (SRDRDRDRDRRRDNA) are enriched in basic and acidic residues.

It belongs to the universal ribosomal protein uS3 family. In terms of assembly, part of the 30S ribosomal subunit. Forms a tight complex with proteins S10 and S14.

In terms of biological role, binds the lower part of the 30S subunit head. Binds mRNA in the 70S ribosome, positioning it for translation. In Rhizobium leguminosarum bv. trifolii (strain WSM2304), this protein is Small ribosomal subunit protein uS3.